A 413-amino-acid polypeptide reads, in one-letter code: Variant surface glycoprotein YnAT 1.3 (413 aa).

A signal peptide spans Met1–Ile22. N-linked (GlcNAc...) asparagine glycans are attached at residues Asn91, Asn361, and Asn379. Asn379 carries GPI-anchor amidated asparagine lipidation. The propeptide at Ser380–Ile413 is removed in mature form.

The protein localises to the cell membrane. Functionally, VSG forms a coat on the surface of the parasite. The trypanosome evades the immune response of the host by expressing a series of antigenically distinct VSGs from an estimated 1000 VSG genes. This chain is Variant surface glycoprotein YnAT 1.3, found in Trypanosoma congolense.